We begin with the raw amino-acid sequence, 183 residues long: MNSENLIRRYVITGSRRLSNYWWASVVFLGAIGFLFTGLSSYFGQNLLPFLQVQNITFFPQGLVMSFYGILGLLLSIYLWLTIIWNVGGGFNEFNKKAGAIRIFRWGFPGKTRCIDISYSLKEVEAIKVDFKQGVNPQRTLYLRVKGKREIPLSQIGQPLTVEEVEKQAAELAKFLQVSVEGL.

The next 2 membrane-spanning stretches (helical) occupy residues 23-43 (WASV…SSYF) and 64-84 (VMSF…LTII).

Belongs to the Ycf4 family.

The protein localises to the plastid. The protein resides in the chloroplast thylakoid membrane. In terms of biological role, seems to be required for the assembly of the photosystem I complex. In Stigeoclonium helveticum (Green alga), this protein is Photosystem I assembly protein Ycf4.